The chain runs to 102 residues: Large ribosomal subunit protein bL21 (102 aa).

Residues 80–91 (KNSKRKKGHRQP) show a composition bias toward basic residues. The tract at residues 80–102 (KNSKRKKGHRQPYTKLTIDKINA) is disordered.

It belongs to the bacterial ribosomal protein bL21 family. Part of the 50S ribosomal subunit. Contacts protein L20.

In terms of biological role, this protein binds to 23S rRNA in the presence of protein L20. This chain is Large ribosomal subunit protein bL21, found in Staphylococcus aureus (strain Mu3 / ATCC 700698).